Reading from the N-terminus, the 250-residue chain is Menaquinol:cytochrome c reductase cytochrome c subunit (250 aa).

The next 3 helical transmembrane spans lie at 46 to 62, 104 to 124, and 137 to 157; these read WLVG…LTVA, VIGA…APFL, and VATG…WESV. Residues 178-250 enclose the Cytochrome c domain; that stretch reads DTNAEGYKIA…LQKMANSSPA (73 aa). Heme c is bound by residues cysteine 192, cysteine 195, and histidine 196. The disordered stretch occupies residues 229–250; that stretch reads MPGGIFKGTDEELQKMANSSPA.

The protein belongs to the cytochrome b family. The main subunits of the menaquinol:cytochrome c complex are a Rieske-type iron-sulfur protein (QcrA), a cytochrome b (QcrB) and a cytochrome c (QcrC). Heme c is required as a cofactor.

It is found in the cell membrane. Its function is as follows. Component of the menaquinol:cytochrome c reductase complex. The sequence is that of Menaquinol:cytochrome c reductase cytochrome c subunit (qcrC) from Geobacillus thermodenitrificans.